A 158-amino-acid polypeptide reads, in one-letter code: Leptin-B (158 aa).

The first 19 residues, 1–19 (MYMPLALVYASFLTLPAST), serve as a signal peptide directing secretion. Residues cysteine 114 and cysteine 158 are joined by a disulfide bond.

Belongs to the leptin family. In terms of tissue distribution, highly expressed in the brain and eye. Expressed at low levels in muscle and skin.

The protein localises to the secreted. Functionally, may function as part of a signaling pathway that acts to regulate the size of the body fat depot. The protein is Leptin-B of Oryzias latipes (Japanese rice fish).